The chain runs to 98 residues: NADH-ubiquinone oxidoreductase chain 4L (98 aa).

Transmembrane regions (helical) follow at residues Met1–Val21, Ser29–Leu49, and Ile58–Leu78.

Belongs to the complex I subunit 4L family. As to quaternary structure, core subunit of respiratory chain NADH dehydrogenase (Complex I) which is composed of 45 different subunits.

The protein localises to the mitochondrion inner membrane. It carries out the reaction a ubiquinone + NADH + 5 H(+)(in) = a ubiquinol + NAD(+) + 4 H(+)(out). Functionally, core subunit of the mitochondrial membrane respiratory chain NADH dehydrogenase (Complex I) which catalyzes electron transfer from NADH through the respiratory chain, using ubiquinone as an electron acceptor. Part of the enzyme membrane arm which is embedded in the lipid bilayer and involved in proton translocation. This Pan paniscus (Pygmy chimpanzee) protein is NADH-ubiquinone oxidoreductase chain 4L (MT-ND4L).